The sequence spans 104 residues: Pterin-4-alpha-carbinolamine dehydratase (104 aa).

Alanine 2 bears the N-acetylalanine mark. Residues 61–63 (DHH) and 78–81 (STHD) contribute to the substrate site.

It belongs to the pterin-4-alpha-carbinolamine dehydratase family. As to quaternary structure, homotetramer and homodimer.

The protein resides in the cytoplasm. It localises to the nucleus. It carries out the reaction (4aS,6R)-4a-hydroxy-L-erythro-5,6,7,8-tetrahydrobiopterin = (6R)-L-erythro-6,7-dihydrobiopterin + H2O. Its function is as follows. Involved in tetrahydrobiopterin biosynthesis. Seems to both prevent the formation of 7-pterins and accelerate the formation of quinonoid-BH2. Coactivator for HNF1A-dependent transcription. Regulates the dimerization of homeodomain protein HNF1A and enhances its transcriptional activity. Also acts as a coactivator for HNF1B-dependent transcription. This chain is Pterin-4-alpha-carbinolamine dehydratase (pcbd), found in Xenopus laevis (African clawed frog).